Consider the following 705-residue polypeptide: uncharacterized protein (705 aa).

Residues serine 554 and histidine 676 each act as charge relay system in the active site.

It belongs to the peptidase S9A family.

This is an uncharacterized protein from Sinorhizobium fredii (strain NBRC 101917 / NGR234).